A 359-amino-acid chain; its full sequence is 3-isopropylmalate dehydrogenase (359 aa).

Substrate-binding residues include Arg-96, Arg-106, Arg-134, and Asp-223. 3 residues coordinate Mg(2+): Asp-223, Asp-247, and Asp-251. 281 to 293 (GSAPDIAGQGIAN) is an NAD(+) binding site.

It belongs to the isocitrate and isopropylmalate dehydrogenases family. LeuB type 1 subfamily. In terms of assembly, homodimer. It depends on Mg(2+) as a cofactor. Requires Mn(2+) as cofactor.

The protein resides in the cytoplasm. It catalyses the reaction (2R,3S)-3-isopropylmalate + NAD(+) = 4-methyl-2-oxopentanoate + CO2 + NADH. It functions in the pathway amino-acid biosynthesis; L-leucine biosynthesis; L-leucine from 3-methyl-2-oxobutanoate: step 3/4. Functionally, catalyzes the oxidation of 3-carboxy-2-hydroxy-4-methylpentanoate (3-isopropylmalate) to 3-carboxy-4-methyl-2-oxopentanoate. The product decarboxylates to 4-methyl-2 oxopentanoate. The chain is 3-isopropylmalate dehydrogenase from Chromohalobacter salexigens (strain ATCC BAA-138 / DSM 3043 / CIP 106854 / NCIMB 13768 / 1H11).